The primary structure comprises 216 residues: Probable nicotinate-nucleotide adenylyltransferase (216 aa).

Belongs to the NadD family.

The enzyme catalyses nicotinate beta-D-ribonucleotide + ATP + H(+) = deamido-NAD(+) + diphosphate. Its pathway is cofactor biosynthesis; NAD(+) biosynthesis; deamido-NAD(+) from nicotinate D-ribonucleotide: step 1/1. Catalyzes the reversible adenylation of nicotinate mononucleotide (NaMN) to nicotinic acid adenine dinucleotide (NaAD). The protein is Probable nicotinate-nucleotide adenylyltransferase of Citrifermentans bemidjiense (strain ATCC BAA-1014 / DSM 16622 / JCM 12645 / Bem) (Geobacter bemidjiensis).